The following is a 271-amino-acid chain: MTRLAETFARTRAEGRAALVTFVTGGDPTPGDMGPILDALVAGGADVIELGMPFTDPMADGPAIQRANLRALGAGTTTADLLAIAAAFRQRHPSVPLVLMGYANPMVRRGPEWFAAEAAKAGVDGVICVDIPPEQDGALGPALRAAGVAPIRLATPTTDAARLPAVLEGASGFLYYVSVAGITGMQQAGQASIEAAVARFKAATDLPVAVGFGVRGPEQAEAIGRVADGVVVGSAIVDLIGEHGAAAAGPVRDFTATLSAALRRAAQEKAA.

Catalysis depends on proton acceptor residues E49 and D60.

Belongs to the TrpA family. As to quaternary structure, tetramer of two alpha and two beta chains.

The catalysed reaction is (1S,2R)-1-C-(indol-3-yl)glycerol 3-phosphate + L-serine = D-glyceraldehyde 3-phosphate + L-tryptophan + H2O. It functions in the pathway amino-acid biosynthesis; L-tryptophan biosynthesis; L-tryptophan from chorismate: step 5/5. In terms of biological role, the alpha subunit is responsible for the aldol cleavage of indoleglycerol phosphate to indole and glyceraldehyde 3-phosphate. This chain is Tryptophan synthase alpha chain, found in Rhizorhabdus wittichii (strain DSM 6014 / CCUG 31198 / JCM 15750 / NBRC 105917 / EY 4224 / RW1) (Sphingomonas wittichii).